The following is a 40-amino-acid chain: Dolichyl-diphosphooligosaccharide--protein glycosyltransferase subunit 4 (40 aa).

Residues 1 to 4 are Lumenal-facing; that stretch reads MITD. A helical membrane pass occupies residues 5-25; the sequence is VQLAIFSNVLGVFLFLLVVAY. At 26-40 the chain is on the cytoplasmic side; it reads HYINANTGKPSAKAK.

This sequence belongs to the OST4 family. Component of the oligosaccharyltransferase (OST) complex.

It localises to the endoplasmic reticulum membrane. In terms of biological role, subunit of the oligosaccharyl transferase (OST) complex that catalyzes the initial transfer of a defined glycan (Glc(3)Man(9)GlcNAc(2) in eukaryotes) from the lipid carrier dolichol-pyrophosphate to an asparagine residue within an Asn-X-Ser/Thr consensus motif in nascent polypeptide chains, the first step in protein N-glycosylation. N-glycosylation occurs cotranslationally and the complex associates with the Sec61 complex at the channel-forming translocon complex that mediates protein translocation across the endoplasmic reticulum (ER). All subunits are required for a maximal enzyme activity. This chain is Dolichyl-diphosphooligosaccharide--protein glycosyltransferase subunit 4, found in Drosophila erecta (Fruit fly).